Here is a 169-residue protein sequence, read N- to C-terminus: MTKKDKKQKVKVKTVETKEGEKIRVFEDLDSFETYLRGETEDEEFDHVHCQVRYYPPFVLHESHQDPEKIKESANSHNKKFVRHLHQHVEKHLLKDIKDSLGVPELKFKDKSKEENFNHVVWRYHAPTAVRDREFLVHVTVECHNDTAMVDVDYLTEPMQPAVQSEQVA.

It belongs to the RGI1 family.

Its subcellular location is the cell membrane. In terms of biological role, involved in the control of energetic metabolism and significantly contribute to cell fitness, especially under respiratory growth conditions. This Eremothecium gossypii (strain ATCC 10895 / CBS 109.51 / FGSC 9923 / NRRL Y-1056) (Yeast) protein is Respiratory growth induced protein 1 (RGI1).